We begin with the raw amino-acid sequence, 843 residues long: Protein P (843 aa).

The terminal protein domain (TP) stretch occupies residues 1 to 177; that stretch reads MPLSYQHFRK…FCGSPYSWEQ (177 aa). Positions 178 to 346 are spacer; sequence ELQHGRLVFQ…YCLSHIVNLL (169 aa). Disordered stretches follow at residues 218-243 and 290-316; these read LKQS…SGSI and STSK…RSQS. Polar residues predominate over residues 290–299; that stretch reads STSKRQSSSG. The polymerase/reverse transcriptase domain (RT) stretch occupies residues 347–690; that stretch reads EDWGPCTEHG…YLHLYPVARQ (344 aa). One can recognise a Reverse transcriptase domain in the interval 357–600; it reads EHNIRIPRTP…YSLNFMGYVI (244 aa). Mg(2+)-binding residues include Asp429, Asp551, and Asp552.

This sequence belongs to the hepadnaviridae P protein family.

It catalyses the reaction DNA(n) + a 2'-deoxyribonucleoside 5'-triphosphate = DNA(n+1) + diphosphate. The catalysed reaction is Endonucleolytic cleavage to 5'-phosphomonoester.. Its activity is regulated as follows. Activated by host HSP70 and HSP40 in vitro to be able to bind the epsilon loop of the pgRNA. Because deletion of the RNase H region renders the protein partly chaperone-independent, the chaperones may be needed indirectly to relieve occlusion of the RNA-binding site by this domain. Inhibited by several reverse-transcriptase inhibitors: Lamivudine, Adefovir and Entecavir. Its function is as follows. Multifunctional enzyme that converts the viral RNA genome into dsDNA in viral cytoplasmic capsids. This enzyme displays a DNA polymerase activity that can copy either DNA or RNA templates, and a ribonuclease H (RNase H) activity that cleaves the RNA strand of RNA-DNA heteroduplexes in a partially processive 3'- to 5'-endonucleasic mode. Neo-synthesized pregenomic RNA (pgRNA) are encapsidated together with the P protein, and reverse-transcribed inside the nucleocapsid. Initiation of reverse-transcription occurs first by binding the epsilon loop on the pgRNA genome, and is initiated by protein priming, thereby the 5'-end of (-)DNA is covalently linked to P protein. Partial (+)DNA is synthesized from the (-)DNA template and generates the relaxed circular DNA (RC-DNA) genome. After budding and infection, the RC-DNA migrates in the nucleus, and is converted into a plasmid-like covalently closed circular DNA (cccDNA). The activity of P protein does not seem to be necessary for cccDNA generation, and is presumably released from (+)DNA by host nuclear DNA repair machinery. The polypeptide is Protein P (Homo sapiens (Human)).